Reading from the N-terminus, the 371-residue chain is Chaperone protein DnaJ (371 aa).

Residues 5-69 enclose the J domain; it reads DYYEVLGLSK…QKRAQYDQFG (65 aa). A CR-type zinc finger spans residues 133-215; it reads GKELNVEIPV…CHGSGKVRKR (83 aa). Zn(2+) is bound by residues cysteine 146, cysteine 149, cysteine 163, cysteine 166, cysteine 189, cysteine 192, cysteine 203, and cysteine 206. CXXCXGXG motif repeat units follow at residues 146 to 153, 163 to 170, 189 to 196, and 203 to 210; these read CDTCKGSG, CKHCSGSG, CSHCSGTG, and CTTCHGSG.

The protein belongs to the DnaJ family. In terms of assembly, homodimer. Zn(2+) serves as cofactor.

The protein resides in the cytoplasm. Functionally, participates actively in the response to hyperosmotic and heat shock by preventing the aggregation of stress-denatured proteins and by disaggregating proteins, also in an autonomous, DnaK-independent fashion. Unfolded proteins bind initially to DnaJ; upon interaction with the DnaJ-bound protein, DnaK hydrolyzes its bound ATP, resulting in the formation of a stable complex. GrpE releases ADP from DnaK; ATP binding to DnaK triggers the release of the substrate protein, thus completing the reaction cycle. Several rounds of ATP-dependent interactions between DnaJ, DnaK and GrpE are required for fully efficient folding. Also involved, together with DnaK and GrpE, in the DNA replication of plasmids through activation of initiation proteins. This Bacillus cereus (strain AH820) protein is Chaperone protein DnaJ.